Reading from the N-terminus, the 214-residue chain is Large ribosomal subunit protein bL25 (214 aa).

The disordered stretch occupies residues Val178–Glu214. Residues Glu179 to Glu214 show a composition bias toward acidic residues.

Belongs to the bacterial ribosomal protein bL25 family. CTC subfamily. In terms of assembly, part of the 50S ribosomal subunit; part of the 5S rRNA/L5/L18/L25 subcomplex. Contacts the 5S rRNA. Binds to the 5S rRNA independently of L5 and L18.

Functionally, this is one of the proteins that binds to the 5S RNA in the ribosome where it forms part of the central protuberance. The sequence is that of Large ribosomal subunit protein bL25 from Corynebacterium jeikeium (strain K411).